The primary structure comprises 491 residues: [Pyruvate dehydrogenase (acetyl-transferring)] kinase 2, mitochondrial (491 aa).

The region spanning 153-480 is the Histidine kinase domain; the sequence is PTIRTLEDAS…DVVLKLGNLM (328 aa). ATP is bound by residues 300–307, Asp-341, 359–360, and 383–446; these read EILRNTYE, SK, and DEVH…GIGL.

Belongs to the PDK/BCKDK protein kinase family. Interacts with PKP1.

It localises to the mitochondrion matrix. It carries out the reaction L-seryl-[pyruvate dehydrogenase E1 alpha subunit] + ATP = O-phospho-L-seryl-[pyruvate dehydrogenase E1 alpha subunit] + ADP + H(+). Inhibits the mitochondrial pyruvate dehydrogenase complex by phosphorylation of the E1 alpha subunit (PDA1), thus contributing to the regulation of glucose metabolism. This is [Pyruvate dehydrogenase (acetyl-transferring)] kinase 2, mitochondrial from Saccharomyces cerevisiae (strain ATCC 204508 / S288c) (Baker's yeast).